Here is a 141-residue protein sequence, read N- to C-terminus: Ribonuclease P protein component (141 aa).

It belongs to the RnpA family. Consists of a catalytic RNA component (M1 or rnpB) and a protein subunit.

The enzyme catalyses Endonucleolytic cleavage of RNA, removing 5'-extranucleotides from tRNA precursor.. In terms of biological role, RNaseP catalyzes the removal of the 5'-leader sequence from pre-tRNA to produce the mature 5'-terminus. It can also cleave other RNA substrates such as 4.5S RNA. The protein component plays an auxiliary but essential role in vivo by binding to the 5'-leader sequence and broadening the substrate specificity of the ribozyme. The sequence is that of Ribonuclease P protein component from Onion yellows phytoplasma (strain OY-M).